Here is a 251-residue protein sequence, read N- to C-terminus: Triosephosphate isomerase (251 aa).

Residue 9–11 (NWK) coordinates substrate. His-96 serves as the catalytic Electrophile. Glu-168 serves as the catalytic Proton acceptor. Substrate contacts are provided by residues Gly-174, Ser-214, and 235-236 (GG).

This sequence belongs to the triosephosphate isomerase family. Homodimer.

It is found in the cytoplasm. It catalyses the reaction D-glyceraldehyde 3-phosphate = dihydroxyacetone phosphate. It functions in the pathway carbohydrate biosynthesis; gluconeogenesis. The protein operates within carbohydrate degradation; glycolysis; D-glyceraldehyde 3-phosphate from glycerone phosphate: step 1/1. Functionally, involved in the gluconeogenesis. Catalyzes stereospecifically the conversion of dihydroxyacetone phosphate (DHAP) to D-glyceraldehyde-3-phosphate (G3P). This is Triosephosphate isomerase from Porphyromonas gingivalis (strain ATCC BAA-308 / W83).